The primary structure comprises 243 residues: Probable fructoselysine utilization operon transcriptional repressor (243 aa).

The HTH gntR-type domain occupies 10–78 (QLLYATVRQR…QGKGTFVQSQ (69 aa)). The H-T-H motif DNA-binding region spans 38–57 (ENELCTQYNVSRITIRKAIS).

It participates in carbohydrate metabolism; fructoselysine degradation [regulation]. Its function is as follows. May regulate the transcription of the frlABCDR operon, involved in the utilization of fructoselysine and psicoselysine. This is Probable fructoselysine utilization operon transcriptional repressor (frlR) from Escherichia coli O157:H7.